Consider the following 640-residue polypeptide: Cytochrome P450 monooxygenase cyp1 (640 aa).

N-linked (GlcNAc...) asparagine glycosylation is present at asparagine 71. A helical transmembrane segment spans residues 120–139 (LLVFLVGLFLGTIYLLYRYW). A glycan (N-linked (GlcNAc...) asparagine) is linked at asparagine 350. Residue cysteine 572 participates in heme binding.

Belongs to the cytochrome P450 family. Heme is required as a cofactor.

It localises to the membrane. Its pathway is secondary metabolite biosynthesis. Functionally, cytochrome P450 monooxygenase; part of the gene cluster that mediates the biosynthesis of the glycolipid biosurfactant ustilagic acid (UA). UA is a secreted cellobiose glycolipid that is toxic for many microorganisms and confers biocontrol activity to U.maydis. UA consists of 15,16-dihydroxypalmitic or 2,15,16-trihydroxypalmitic acid, which is O-glycosidically linked to cellobiose at its terminal hydroxyl group. In addition, the cellobiose moiety is acetylated and acylated with a short-chain hydroxy fatty acid. UA biosynthesis starts with omega-hydroxylation of palmitic acid catalyzed by the cytochrome P450 monooxygenase cyp1. Terminal hydroxylation of palmitic acid precedes subterminal hydroxylation catalyzed by the cytochrome P450 monooxygenase cyp2. Sequential glucosylation of the hydroxy fatty acid is probably catalyzed by the glycosyltransferase ugt1. The cellobiose lipid is further decorated by acetylation of the proximal glucose residue and by acylation with a short-chain beta-hydroxy fatty acid at the distal glucose residue. The acyltransferase uat1 may be a good candidate for catalyzing either acetylation or acylation of the cellobiose lipid. The fatty acid synthase fas2 may be involved in synthesis of the carbon backbone of the short-chain beta-hydroxy fatty acid esterified to the cellobiose disaccharide. The secreted UA consists of a mixture of both alpha-hydroxylated and non-hydroxylated glycolipids; therefore, alpha-hydroxylation of the long-chain fatty, catalyzed by the fatty acid hydroxylase ahd1, occurs late in UA biosynthesis and may be the last step before secretion. The sequence is that of Cytochrome P450 monooxygenase cyp1 from Mycosarcoma maydis (Corn smut fungus).